We begin with the raw amino-acid sequence, 320 residues long: Polycomb complex protein BMI-1-A (320 aa).

Residues 18–57 (CVLCGGYFIDATTIIECLHSFCKMCIVRYLETSKYCPICD) form an RING-type zinc finger. The short motif at 81–95 (KLVPGLFKNEMKRRR) is the Nuclear localization signal element. A disordered region spans residues 234–320 (ITHPQEGLNN…ALNGSSTSSG (87 aa)). Positions 262–281 (VPSTSSPLPSPSTLVQPSQP) are enriched in low complexity. Residues 285–304 (HISSPINGTTMTSPNRQFNF) are compositionally biased toward polar residues.

Component of a PRC1-like complex. Homodimer. Interacts with cbx2.

The protein resides in the nucleus. Functionally, component of a Polycomb group (PcG) multiprotein PRC1-like complex, a complex class required to maintain the transcriptionally repressive state of many genes, including Hox genes, throughout development. PcG PRC1 complex acts via chromatin remodeling and modification of histones; it mediates monoubiquitination of histone H2A 'Lys-119', rendering chromatin heritably changed in its expressibility. In the PRC1 complex, it is required to stimulate the E3 ubiquitin-protein ligase activity of rnf2. The sequence is that of Polycomb complex protein BMI-1-A (bmi1a) from Danio rerio (Zebrafish).